Consider the following 570-residue polypeptide: Proline--tRNA ligase (570 aa).

The protein belongs to the class-II aminoacyl-tRNA synthetase family. ProS type 1 subfamily. As to quaternary structure, homodimer.

The protein resides in the cytoplasm. The enzyme catalyses tRNA(Pro) + L-proline + ATP = L-prolyl-tRNA(Pro) + AMP + diphosphate. Functionally, catalyzes the attachment of proline to tRNA(Pro) in a two-step reaction: proline is first activated by ATP to form Pro-AMP and then transferred to the acceptor end of tRNA(Pro). As ProRS can inadvertently accommodate and process non-cognate amino acids such as alanine and cysteine, to avoid such errors it has two additional distinct editing activities against alanine. One activity is designated as 'pretransfer' editing and involves the tRNA(Pro)-independent hydrolysis of activated Ala-AMP. The other activity is designated 'posttransfer' editing and involves deacylation of mischarged Ala-tRNA(Pro). The misacylated Cys-tRNA(Pro) is not edited by ProRS. This chain is Proline--tRNA ligase, found in Geotalea daltonii (strain DSM 22248 / JCM 15807 / FRC-32) (Geobacter daltonii).